A 554-amino-acid chain; its full sequence is Sesquithujene synthase A (554 aa).

Mg(2+) is bound by residues Asp308 and Asp312. Asp308 and Asp312 together coordinate substrate. The DDXXD motif signature appears at 308–312 (DDMFD). The segment at 407–411 (SIGAN) is determine the stereoselectivity of the enzyme. Arg449 and Asn452 together coordinate substrate. Mg(2+) is bound by residues Asn452, Ser456, and Glu460.

It belongs to the terpene synthase family. In terms of assembly, monomer. Requires Mg(2+) as cofactor. Mn(2+) is required as a cofactor. As to expression, highly expressed in the husk. Detected in leaves.

Its subcellular location is the cytoplasm. The catalysed reaction is (2E,6E)-farnesyl diphosphate = sesquithujene + diphosphate. It catalyses the reaction (2Z,6Z)-farnesyl diphosphate = (1S,5S,6S)-alpha-bergamotene + diphosphate. It carries out the reaction (2E,6E)-farnesyl diphosphate = (E)-beta-farnesene + diphosphate. The enzyme catalyses (2E,6E)-farnesyl diphosphate = (S)-beta-bisabolene + diphosphate. The catalysed reaction is (2Z,6E)-farnesyl diphosphate = (-)-beta-curcumene + diphosphate. It catalyses the reaction (2E,6E)-farnesyl diphosphate = gamma-curcumene + diphosphate. It carries out the reaction (2E,6E)-farnesyl diphosphate = sesquisabinene B + diphosphate. It participates in secondary metabolite biosynthesis; terpenoid biosynthesis. In terms of biological role, sesquiterpene synthase involved in the production after herbivore attack of a blend of volatiles that attracts natural enemies of herbivores. Converts farnesyl diphosphate to sesquithujene, (S)-beta-bisabolene, (Z)-alpha-bergamotene, sesquisabinene B and several minor products. Can also act in vitro as a monoterpene synthase, converting geranyl diphosphate to (S)-(-)-limonene, beta-myrcene and 11 other monoterpenes. This is Sesquithujene synthase A from Zea mays (Maize).